The chain runs to 384 residues: Urotensin-2 receptor (384 aa).

Residues 1–54 (MALSPEPSSRFLVPATMGSAMPELPGAPNASLNSSLASPTEPNSLEDLVATGTI) are Extracellular-facing. 2 N-linked (GlcNAc...) asparagine glycosylation sites follow: Asn29 and Asn33. The helical transmembrane segment at 55 to 77 (GVVLSAMGVVGMAGNVYTLTVMC) threads the bilayer. Residues 78 to 87 (RFLHTSASMY) are Cytoplasmic-facing. The helical transmembrane segment at 88–113 (VYVINLALADLLYLLSIPFIVATYVT) threads the bilayer. Residues 114–124 (KRWHFGDVGCR) lie on the Extracellular side of the membrane. A disulfide bridge connects residues Cys123 and Cys199. A helical membrane pass occupies residues 125–146 (VLFSLDFLTMHASIFTLTLMSR). Residues 147–167 (ERYAAVVRPLDTVQRSKGYRK) are Cytoplasmic-facing. Residues 168-186 (VLALGTWLLALLLALPMML) traverse the membrane as a helical segment. Residues 187-209 (AIRLVRRGHKSLCLPAWGQRTHR) lie on the Extracellular side of the membrane. The helical transmembrane segment at 210–232 (AYLTLLFGTSIVGPGVVIGLLYV) threads the bilayer. Over 233–259 (RLARAYWLSQRSSFTQTRRLPNPRVLY) the chain is Cytoplasmic. Residues 260–285 (LILGIVLLFWACFLPFWLWQLLAQYR) traverse the membrane as a helical segment. Over 286 to 299 (GAPPLAPRSARIVN) the chain is Extracellular. A helical transmembrane segment spans residues 300 to 320 (YLTTCLTYGNSCVNPFLYTLL). Over 321 to 384 (TKNYRDYRQR…SQAVPGSLCV (64 aa)) the chain is Cytoplasmic.

This sequence belongs to the G-protein coupled receptor 1 family. In terms of tissue distribution, expressed in neural tissue, including sensory epithelia.

The protein resides in the cell membrane. Functionally, high affinity receptor for urotensin-2 and urotensin-2B. The activity of this receptor is mediated by a G-protein that activate a phosphatidylinositol-calcium second messenger system. This chain is Urotensin-2 receptor (UTS2R), found in Bos taurus (Bovine).